The sequence spans 142 residues: MEEVEAEEPQEFSHRQRLKAAVHYTVGCLCQEVTLNKQVNFSKQTIAAISEVTFRQCENFAKDLEMFARHAKRSTVTTEDVKLLARRNNSLLKYITEKNEEIAQLNLKGKAKKKRKPEDESRSSRESMAEELDGAEELQSES.

The tract at residues 107–142 (LKGKAKKKRKPEDESRSSRESMAEELDGAEELQSES) is disordered. Residues 116–128 (KPEDESRSSRESM) are compositionally biased toward basic and acidic residues. Residues 129–142 (AEELDGAEELQSES) are compositionally biased toward acidic residues.

This sequence belongs to the TAF9 family. CENP-S/MHF1 subfamily. In terms of assembly, heterodimer with CENPX, sometimes called MHF; this interaction stabilizes both partners. MHF heterodimers can assemble to form tetrameric structures. MHF also coassemble with CENPT-CENPW heterodimers at centromeres to form the tetrameric CENP-T-W-S-X complex. Forms a discrete complex with FANCM and CENPX, called FANCM-MHF; this interaction, probably mediated by direct binding between CENPS and FANCM, leads to synergistic activation of double-stranded DNA binding and strongly stimulates FANCM-mediated DNA remodeling. Recruited by FANCM to the Fanconi anemia (FA) core complex, which consists of CENPS, CENPX, FANCA, FANCB, FANCC, FANCE, FANCF, FANCG, FANCL, FANCM, FAAP24 and FAAP100. The FA core complex associates with Bloom syndrome (BLM) complex, which consists of at least BLM, DNA topoisomerase 3-alpha (TOP3A), RMI1/BLAP75, RPA1/RPA70 and RPA2/RPA32. The super complex between FA and BLM is called BRAFT. Component of the CENPA-CAD complex, composed of CENPI, CENPK, CENPL, CENPO, CENPP, CENPQ, CENPR and CENPS. The CENPA-CAD complex is probably recruited on centromeres by the CENPA-NAC complex, at least composed of CENPA, CENPC, CENPH, CENPM, CENPN, CENPT and CENPU.

Its subcellular location is the nucleus. The protein resides in the chromosome. It localises to the centromere. It is found in the kinetochore. DNA-binding component of the Fanconi anemia (FA) core complex. Required for the normal activation of the FA pathway, leading to monoubiquitination of the FANCI-FANCD2 complex in response to DNA damage, cellular resistance to DNA cross-linking drugs, and prevention of chromosomal breakage. In complex with CENPX (MHF heterodimer), crucial cofactor for FANCM in both binding and ATP-dependent remodeling of DNA. Stabilizes FANCM. In complex with CENPX and FANCM (but not other FANC proteins), rapidly recruited to blocked forks and promotes gene conversion at blocked replication forks. In complex with CENPT, CENPW and CENPX (CENP-T-W-S-X heterotetramer), involved in the formation of a functional kinetochore outer plate, which is essential for kinetochore-microtubule attachment and faithful mitotic progression. As a component of MHF and CENP-T-W-S-X complexes, binds DNA and bends it to form a nucleosome-like structure. DNA-binding function is fulfilled in the presence of CENPX, with the following preference for DNA substates: Holliday junction &gt; double-stranded &gt; splay arm &gt; single-stranded. Does not bind DNA on its own. This is Centromere protein S (Cenps) from Mus musculus (Mouse).